The primary structure comprises 331 residues: XylDLEGF operon transcriptional activator 3 (331 aa).

The HTH araC/xylS-type domain occupies 214-315 (ERVVQFIEDN…GELPSDTLRR (102 aa)). 2 DNA-binding regions (H-T-H motif) span residues 231-252 (ERLAELALMSPRSLYTLFEKHA) and 282-305 (VTEMALDYGFFHTGRFAENYRSTF).

The protein localises to the cytoplasm. Functionally, regulatory protein of the TOL plasmid xyl operons. XylS activates the xylXYZLTEGFJQKIH operon required for the degradation of toluene, m-xylene and p-xylene. This is XylDLEGF operon transcriptional activator 3 (xylS3) from Pseudomonas putida (Arthrobacter siderocapsulatus).